The chain runs to 616 residues: Auxin efflux carrier component 4 (616 aa).

Residues 1-7 (MITWHDL) are Extracellular-facing. Residues 8–28 (YTVLTAVVPLYVAMILAYGSV) traverse the membrane as a helical segment. The Cytoplasmic segment spans residues 29–38 (QWWKIFSPDQ). The chain crosses the membrane as a helical span at residues 39–59 (CSGINRFVAIFAVPLLSFHFI). Valine 51 is a (indol-3-yl)acetate binding site. Residues 60–70 (STNDPYAMNFR) are Extracellular-facing. Residues 71–91 (FVAADTLQKIIMLVLLALWAN) form a helical membrane-spanning segment. Topologically, residues 92 to 101 (LTKNGSLEWM) are cytoplasmic. Residues 102–122 (ITIFSLSTLPNTLVMGIPLLI) traverse the membrane as a helical segment. (indol-3-yl)acetate-binding residues include asparagine 112 and leucine 114. The Extracellular portion of the chain corresponds to 123–131 (AMYGTYAGS). Residues 132 to 152 (LMVQVVVLQCIIWYTLLLFLF) traverse the membrane as a helical segment. Tyrosine 145 contributes to the (indol-3-yl)acetate binding site. Over 153 to 476 (EYRGAKLLIM…LIRNPNTYSS (324 aa)) the chain is Cytoplasmic. Phosphoserine occurs at positions 223, 240, and 280. The disordered stretch occupies residues 302-343 (AAGSYPAPNPEFSTGTGVSTKPNKIPKENQQQLQEKDSKASH). Residues 312–334 (EFSTGTGVSTKPNKIPKENQQQL) show a composition bias toward polar residues. Phosphoserine occurs at positions 358 and 395. The interval 390–411 (DQPRKSNARGGGDDIGGLDSGE) is disordered. Gly residues predominate over residues 398–409 (RGGGDDIGGLDS). A helical membrane pass occupies residues 477–497 (LIGLIWALVAYRWHVAMPKIL). The Extracellular segment spans residues 498–500 (QQS). A helical transmembrane segment spans residues 501–521 (ISILSDAGLGMAMFSLGLFMA). The Cytoplasmic segment spans residues 522 to 535 (LQPKIIACGNSVAT). Residues 536–556 (FAMAVRFITGPAIMAVAGIAI) traverse the membrane as a helical segment. Over 557–561 (GLHGD) the chain is Extracellular. A helical transmembrane segment spans residues 562 to 582 (LLRIAIVQAALPQGIVPFVFA). Residues isoleucine 576 and valine 577 each coordinate (indol-3-yl)acetate. Topologically, residues 583-595 (KEYNVHPTILSTG) are cytoplasmic. A helical transmembrane segment spans residues 596-616 (VIFGMLIALPITLVYYILLGL).

Belongs to the auxin efflux carrier (TC 2.A.69.1) family. As to quaternary structure, homodimer. As to expression, expressed in the quiescent center precursors and surrounding cells. Present in columella cells of primary roots. Detected in pollen.

Its subcellular location is the cell membrane. Its function is as follows. Acts as a component of the auxin efflux carrier. Plays a role in generating a sink for auxin into columella cells. Maintains the endogenous auxin gradient, which is essential for correct root patterning. Involved in EXO70A3-regulated gravitropic responses in columella cells and in root system architecture (RSA). Together with PIN3 and PIN7, involved in the connective auxin transport (CAT) that ensures communication across the shoot system, and modulates strigolactone-mediated shoot branching control. The abcb19 pin3 pin4 pin7 quadruple mutant exhibits an additive phenotype on strigolactone-mediated bud outgrowth responses and shoot branching control. The sequence is that of Auxin efflux carrier component 4 from Arabidopsis thaliana (Mouse-ear cress).